Consider the following 953-residue polypeptide: Catenin alpha-2 (953 aa).

T632 carries the phosphothreonine modification. A phosphoserine mark is found at S640, S651, and S901. Positions 912–927 (EKKPLVKREKPEEFQT) are enriched in basic and acidic residues. The interval 912 to 939 (EKKPLVKREKPEEFQTRVRRGSQKKHIS) is disordered. A compositionally biased stretch (basic residues) spans 928-938 (RVRRGSQKKHI). S939 is modified (phosphoserine).

The protein belongs to the vinculin/alpha-catenin family. Interacts with CDH1 and CDH2. Interacts with ZNF639; recruits CTNNA2 to the nucleus. Interacts with F-actin. In terms of tissue distribution, expressed in neural tissues, with strongest expression in fetal and adult brain. Expressed in the developing cortical plate and marginal zone of 20-week-old human fetal brain.

The protein localises to the cell membrane. It is found in the cytoplasm. The protein resides in the cytoskeleton. Its subcellular location is the cell junction. It localises to the adherens junction. The protein localises to the cell projection. It is found in the axon. The protein resides in the nucleus. Its function is as follows. May function as a linker between cadherin adhesion receptors and the cytoskeleton to regulate cell-cell adhesion and differentiation in the nervous system. Required for proper regulation of cortical neuronal migration and neurite growth. It acts as a negative regulator of Arp2/3 complex activity and Arp2/3-mediated actin polymerization. It thereby suppresses excessive actin branching which would impair neurite growth and stability. Regulates morphological plasticity of synapses and cerebellar and hippocampal lamination during development. Functions in the control of startle modulation. The protein is Catenin alpha-2 (CTNNA2) of Homo sapiens (Human).